Reading from the N-terminus, the 175-residue chain is Crossover junction endodeoxyribonuclease RuvC (175 aa).

Residues D16, E76, and D148 contribute to the active site. 3 residues coordinate Mg(2+): D16, E76, and D148.

The protein belongs to the RuvC family. As to quaternary structure, homodimer which binds Holliday junction (HJ) DNA. The HJ becomes 2-fold symmetrical on binding to RuvC with unstacked arms; it has a different conformation from HJ DNA in complex with RuvA. In the full resolvosome a probable DNA-RuvA(4)-RuvB(12)-RuvC(2) complex forms which resolves the HJ. Mg(2+) is required as a cofactor.

It is found in the cytoplasm. The enzyme catalyses Endonucleolytic cleavage at a junction such as a reciprocal single-stranded crossover between two homologous DNA duplexes (Holliday junction).. In terms of biological role, the RuvA-RuvB-RuvC complex processes Holliday junction (HJ) DNA during genetic recombination and DNA repair. Endonuclease that resolves HJ intermediates. Cleaves cruciform DNA by making single-stranded nicks across the HJ at symmetrical positions within the homologous arms, yielding a 5'-phosphate and a 3'-hydroxyl group; requires a central core of homology in the junction. The consensus cleavage sequence is 5'-(A/T)TT(C/G)-3'. Cleavage occurs on the 3'-side of the TT dinucleotide at the point of strand exchange. HJ branch migration catalyzed by RuvA-RuvB allows RuvC to scan DNA until it finds its consensus sequence, where it cleaves and resolves the cruciform DNA. This Rhodopseudomonas palustris (strain BisB18) protein is Crossover junction endodeoxyribonuclease RuvC.